The following is a 689-amino-acid chain: Armadillo-like helical domain-containing protein 3 (689 aa).

Residues 520 to 538 form a helical membrane-spanning segment; sequence IFTLTLMVVNLFNMFITYG.

Belongs to the ARMH3 family.

The protein resides in the golgi apparatus membrane. Its subcellular location is the cytoplasm. May be involved in Golgi maintenance and protein secretion. In Xenopus laevis (African clawed frog), this protein is Armadillo-like helical domain-containing protein 3.